We begin with the raw amino-acid sequence, 336 residues long: N-acetylornithine carbamoyltransferase (336 aa).

Carbamoyl phosphate contacts are provided by residues 49–52 (SMRT), W77, and R112. E144 provides a ligand contact to N(2)-acetyl-L-ornithine. A carbamoyl phosphate-binding site is contributed by 148-151 (HPCQ). N(2)-acetyl-L-ornithine-binding residues include K252 and L295. A carbamoyl phosphate-binding site is contributed by 294-295 (CL). N6-carboxylysine is present on K302. R322 is a carbamoyl phosphate binding site.

This sequence belongs to the aspartate/ornithine carbamoyltransferase superfamily. AOTCase family. As to quaternary structure, homotrimer.

The protein resides in the cytoplasm. The enzyme catalyses N(2)-acetyl-L-ornithine + carbamoyl phosphate = N(2)-acetyl-L-citrulline + phosphate + H(+). It participates in amino-acid biosynthesis; L-arginine biosynthesis. Carboxylation at Lys-302 increases the catalytic activity of the enzyme. Its function is as follows. Catalyzes the transfer of the carbamoyl group from carbamoyl phosphate to the delta-amino group of N(2)-acetyl-L-ornithine to produce N(2)-acetyl-L-citrulline. This is a step in an alternative arginine biosynthesis pathway. The enzyme has no activity with ornithine. This chain is N-acetylornithine carbamoyltransferase, found in Xylella fastidiosa (strain Temecula1 / ATCC 700964).